We begin with the raw amino-acid sequence, 230 residues long: 5'-methylthioadenosine/S-adenosylhomocysteine nucleosidase (230 aa).

Residue E12 is the Proton acceptor of the active site. Substrate is bound by residues G78, M153, and 174 to 175 (ME). D198 functions as the Proton donor in the catalytic mechanism.

This sequence belongs to the PNP/UDP phosphorylase family. MtnN subfamily.

The enzyme catalyses S-adenosyl-L-homocysteine + H2O = S-(5-deoxy-D-ribos-5-yl)-L-homocysteine + adenine. It catalyses the reaction S-methyl-5'-thioadenosine + H2O = 5-(methylsulfanyl)-D-ribose + adenine. The catalysed reaction is 5'-deoxyadenosine + H2O = 5-deoxy-D-ribose + adenine. Its pathway is amino-acid biosynthesis; L-methionine biosynthesis via salvage pathway; S-methyl-5-thio-alpha-D-ribose 1-phosphate from S-methyl-5'-thioadenosine (hydrolase route): step 1/2. Its function is as follows. Catalyzes the irreversible cleavage of the glycosidic bond in both 5'-methylthioadenosine (MTA) and S-adenosylhomocysteine (SAH/AdoHcy) to adenine and the corresponding thioribose, 5'-methylthioribose and S-ribosylhomocysteine, respectively. Also cleaves 5'-deoxyadenosine, a toxic by-product of radical S-adenosylmethionine (SAM) enzymes, into 5-deoxyribose and adenine. The sequence is that of 5'-methylthioadenosine/S-adenosylhomocysteine nucleosidase from Lysinibacillus sphaericus (strain C3-41).